The following is a 152-amino-acid chain: Deoxyuridine 5'-triphosphate nucleotidohydrolase (152 aa).

Substrate contacts are provided by residues 72–74, N85, and 89–91; these read RSG and TID.

It belongs to the dUTPase family. Requires Mg(2+) as cofactor.

It catalyses the reaction dUTP + H2O = dUMP + diphosphate + H(+). The protein operates within pyrimidine metabolism; dUMP biosynthesis; dUMP from dCTP (dUTP route): step 2/2. Functionally, this enzyme is involved in nucleotide metabolism: it produces dUMP, the immediate precursor of thymidine nucleotides and it decreases the intracellular concentration of dUTP so that uracil cannot be incorporated into DNA. This is Deoxyuridine 5'-triphosphate nucleotidohydrolase from Rhodopseudomonas palustris (strain HaA2).